Here is a 444-residue protein sequence, read N- to C-terminus: Methylenetetrahydrofolate--tRNA-(uracil-5-)-methyltransferase TrmFO (444 aa).

An FAD-binding site is contributed by 10–15 (GAGLAG).

The protein belongs to the MnmG family. TrmFO subfamily. It depends on FAD as a cofactor.

It localises to the cytoplasm. The enzyme catalyses uridine(54) in tRNA + (6R)-5,10-methylene-5,6,7,8-tetrahydrofolate + NADH + H(+) = 5-methyluridine(54) in tRNA + (6S)-5,6,7,8-tetrahydrofolate + NAD(+). The catalysed reaction is uridine(54) in tRNA + (6R)-5,10-methylene-5,6,7,8-tetrahydrofolate + NADPH + H(+) = 5-methyluridine(54) in tRNA + (6S)-5,6,7,8-tetrahydrofolate + NADP(+). Functionally, catalyzes the folate-dependent formation of 5-methyl-uridine at position 54 (M-5-U54) in all tRNAs. This Streptococcus pneumoniae (strain 70585) protein is Methylenetetrahydrofolate--tRNA-(uracil-5-)-methyltransferase TrmFO.